A 365-amino-acid chain; its full sequence is Phosphatidylcholine:ceramide cholinephosphotransferase 2 (365 aa).

A compositionally biased stretch (basic and acidic residues) spans 1-14 (MDIIETAKLEEHLE). Residues 1-52 (MDIIETAKLEEHLENQPSDPTNTYARPAEPVEEENKNGNGKPKSLSSGLRKG) form a disordered region. Residues 15-24 (NQPSDPTNTY) are compositionally biased toward polar residues. The next 4 helical transmembrane spans lie at 80 to 100 (GIAFIYAVFNLVLTTVMITVV), 128 to 148 (FSVSEINGIILVGLWITQWLF), 159 to 179 (FCFIIGTLYLYRCITMYVTTL), and 206 to 226 (LISGGGLSITGSHILCGDFLF). Residue His-229 is part of the active site. A helical membrane pass occupies residues 248–268 (FWWYHLICWLLSAAGIICILV). Residues His-272 and Asp-276 contribute to the active site. A helical transmembrane segment spans residues 275–295 (IDVIIAYYITTRLFWWYHSMA). The Cytoplasmic portion of the chain corresponds to 296 to 365 (NEKNLKVSSQ…KIGEDNEKST (70 aa)). Residues Cys-331, Cys-332, Cys-343, and Cys-348 are each lipidated (S-palmitoyl cysteine).

This sequence belongs to the sphingomyelin synthase family. In terms of processing, palmitoylated on Cys-331, Cys-332, Cys-343 and Cys-348; which plays an important role in plasma membrane localization. In terms of tissue distribution, brain, heart, kidney, liver, muscle and stomach. Also expressed in a number of cell lines such as carcinoma HeLa cells, hepatoma Hep-G2 cells, and colon carcinoma Caco-2 cells.

The protein resides in the cell membrane. Its subcellular location is the golgi apparatus membrane. It carries out the reaction an N-acylsphing-4-enine + a 1,2-diacyl-sn-glycero-3-phosphocholine = a sphingomyelin + a 1,2-diacyl-sn-glycerol. The catalysed reaction is an N-acylsphinganine + a 1,2-diacyl-sn-glycero-3-phosphocholine = an N-acylsphinganine-1-phosphocholine + a 1,2-diacyl-sn-glycerol. The enzyme catalyses an N-acyl-(4R)-4-hydroxysphinganine + a 1,2-diacyl-sn-glycero-3-phosphocholine = an N-acyl-(4R)-4-hydroxysphinganine-phosphocholine + a 1,2-diacyl-sn-glycerol. It catalyses the reaction an N-acylsphinganine + a 1,2-diacyl-sn-glycero-3-phosphoethanolamine = an N-acylsphinganine-1-phosphoethanolamine + a 1,2-diacyl-sn-glycerol. It carries out the reaction an N-acyl-(4R)-4-hydroxysphinganine + a 1,2-diacyl-sn-glycero-3-phosphoethanolamine = an N-acyl-(4R)-4-hydroxysphinganine-1-phosphoethanolamine + a 1,2-diacyl-sn-glycerol. The catalysed reaction is an N-acylsphing-4-enine + a 1,2-diacyl-sn-glycero-3-phosphoethanolamine = an N-acylsphing-4-enine 1-phosphoethanolamine + a 1,2-diacyl-sn-glycerol. The enzyme catalyses 1,2-dihexadecanoyl-sn-glycero-3-phosphocholine + an N-acylsphing-4-enine = 1,2-dihexadecanoyl-sn-glycerol + a sphingomyelin. It catalyses the reaction 1-(9Z-octadecenoyl)-2-acyl-sn-3-glycerol + a sphingomyelin = a 1-(9Z-octadecenoyl)-2-acyl-sn-glycero-3-phosphocholine + an N-acylsphing-4-enine. It carries out the reaction N-hexadecanoylsphinganine + a 1,2-diacyl-sn-glycero-3-phosphocholine = N-hexadecanoyl-sphinganine-1-phosphocholine + a 1,2-diacyl-sn-glycerol. The catalysed reaction is N-hexadecanoyl-(4R)-hydroxysphinganine + a 1,2-diacyl-sn-glycero-3-phosphocholine = N-hexadecanoyl-(4R)-hydroxysphinganine-phosphocholine + a 1,2-diacyl-sn-glycerol. The enzyme catalyses N-hexadecanoylsphinganine + a 1,2-diacyl-sn-glycero-3-phosphoethanolamine = N-hexadecanoyl-sphinganine-1-phosphoethanolamine + a 1,2-diacyl-sn-glycerol. It catalyses the reaction N-hexadecanoyl-(4R)-hydroxysphinganine + a 1,2-diacyl-sn-glycero-3-phosphoethanolamine = N-hexadecanoyl-(4R)-hydroxysphinganine-1-phosphoethanolamine + a 1,2-diacyl-sn-glycerol. Its pathway is sphingolipid metabolism. With respect to regulation, inhibited by bacterial PC-phospholipase C inhibitor D609. Sphingomyelin synthase that primarily contributes to sphingomyelin synthesis and homeostasis at the plasma membrane. Catalyzes the reversible transfer of phosphocholine moiety in sphingomyelin biosynthesis: in the forward reaction transfers phosphocholine head group of phosphatidylcholine (PC) on to ceramide (CER) to form ceramide phosphocholine (sphingomyelin, SM) and diacylglycerol (DAG) as by-product, and in the reverse reaction transfers phosphocholine from SM to DAG to form PC and CER. The direction of the reaction appears to depend on the levels of CER and DAG in the plasma membrane. Does not use free phosphorylcholine or CDP-choline as donors. Can also transfer phosphoethanolamine head group of phosphatidylethanolamine (PE) on to ceramide (CER) to form ceramide phosphoethanolamine (CPE). Regulates receptor-mediated signal transduction via mitogenic DAG and proapoptotic CER, as well as via SM, a structural component of membrane rafts that serve as platforms for signal transduction and protein sorting. To a lesser extent, plays a role in secretory transport via regulation of DAG pool at the Golgi apparatus and its downstream effects on PRKD1. Required for normal bone matrix mineralization. The chain is Phosphatidylcholine:ceramide cholinephosphotransferase 2 from Homo sapiens (Human).